Consider the following 1337-residue polypeptide: Activated Cdc42 kinase-like (1337 aa).

S71 bears the Phosphoserine mark. Residues 133 to 399 (ISVNKQLGTG…GEIYDQLPDM (267 aa)) form the Protein kinase domain. Residues 139 to 147 (LGTGEFGIV) and K164 contribute to the ATP site. The active-site Proton acceptor is the D260. Y291 and Y292 each carry phosphotyrosine. Residues 399–460 (MKPEQLKAVV…NPSNTVAFLE (62 aa)) form the SH3 domain. A CRIB domain is found at 488–502 (ISKPQNDFKHTGHVG). The tract at residues 714-739 (SGDTNGNKHGHGLLPTLSKKKSSGTV) is disordered. A phosphoserine mark is found at S764 and S778. Positions 786-822 (RFPHLSNNGSGDKSGGLGTSGSAHTPTHGNASPFPKK) are disordered. Positions 805 to 815 (SGSAHTPTHGN) are enriched in polar residues. Residues S831, S918, and S924 each carry the phosphoserine modification. Disordered regions lie at residues 906-969 (AGLS…TSTK) and 1024-1045 (PSGM…PTVG). The segment covering 947–957 (PESPNPIPLPP) has biased composition (pro residues).

The protein belongs to the protein kinase superfamily. Tyr protein kinase family.

It catalyses the reaction L-tyrosyl-[protein] + ATP = O-phospho-L-tyrosyl-[protein] + ADP + H(+). Its function is as follows. Likely to act as a downstream effector of Cdc42 during dorsal closure, acting in a kinase independent manner with the other ACK family member Ack to positively regulate expression of the myosin zip by promoting the endocytosis of Egfr in the amnioserosa (AS). This Drosophila melanogaster (Fruit fly) protein is Activated Cdc42 kinase-like.